The primary structure comprises 274 residues: Halorhodopsin (274 aa).

The propeptide occupies 1–21; that stretch reads MSITSVPGVVDAGVLGAQSAA. Over 22–25 the chain is Extracellular; sequence AVRE. The helical transmembrane segment at 26 to 51 threads the bilayer; that stretch reads NALLSSSLWVNVALAGIAILVFVYMG. The Cytoplasmic segment spans residues 52 to 57; that stretch reads RTIRPG. A helical membrane pass occupies residues 58–81; that stretch reads RPRLIWGATLMIPLVSISSYLGLL. Over 82-105 the chain is Extracellular; it reads SGLTVGMIEMPAGHALAGEMVRSQ. Chloride contacts are provided by Q105, T111, and S115. The helical transmembrane segment at 106-127 threads the bilayer; it reads WGRYLTWALSTPMILLALGLLA. Over 128 to 130 the chain is Cytoplasmic; sequence DVD. Residues 131–154 traverse the membrane as a helical segment; sequence LGSLFTVIAADIGMCVTGLAAAMT. Residues 155-157 lie on the Extracellular side of the membrane; the sequence is TSA. Residues 158–180 form a helical membrane-spanning segment; it reads LLFRWAFYAISCAFFVVVLSALV. At 181–192 the chain is on the cytoplasmic side; the sequence is TDWAASASSAGT. A helical membrane pass occupies residues 193–216; the sequence is AEIFDTLRVLTVVLWLGYPIVWAV. Residues 217 to 226 lie on the Extracellular side of the membrane; that stretch reads GVEGLALVQS. The helical transmembrane segment at 227–255 threads the bilayer; sequence VGVTSWAYSVLDVFAKYVFAFILLRWVAN. K242 is modified (N6-(retinylidene)lysine). Residues 256–274 are Cytoplasmic-facing; it reads NERTVAVAGQTLGTMSSDD.

This sequence belongs to the archaeal/bacterial/fungal opsin family. In terms of assembly, homotrimer.

Its subcellular location is the cell membrane. Its function is as follows. Light-driven chloride pump. In Halobacterium salinarum (strain ATCC 29341 / DSM 671 / R1), this protein is Halorhodopsin (hop).